Consider the following 204-residue polypeptide: Holliday junction branch migration complex subunit RuvA (204 aa).

Residues 1-64 (MIGRLRGIIL…EDAQLLFGFN (64 aa)) form a domain I region. A domain II region spans residues 65–143 (SKPERALFRE…GMHGDLFASD (79 aa)). Residues 144-155 (APFALTSEMPKE) form a flexible linker region. The domain III stretch occupies residues 156–204 (TANDAEGEAVAALTALGYKPQEASRMIVKVGKPDADCETLIREALRAAI).

It belongs to the RuvA family. As to quaternary structure, homotetramer. Forms an RuvA(8)-RuvB(12)-Holliday junction (HJ) complex. HJ DNA is sandwiched between 2 RuvA tetramers; dsDNA enters through RuvA and exits via RuvB. An RuvB hexamer assembles on each DNA strand where it exits the tetramer. Each RuvB hexamer is contacted by two RuvA subunits (via domain III) on 2 adjacent RuvB subunits; this complex drives branch migration. In the full resolvosome a probable DNA-RuvA(4)-RuvB(12)-RuvC(2) complex forms which resolves the HJ.

It is found in the cytoplasm. Functionally, the RuvA-RuvB-RuvC complex processes Holliday junction (HJ) DNA during genetic recombination and DNA repair, while the RuvA-RuvB complex plays an important role in the rescue of blocked DNA replication forks via replication fork reversal (RFR). RuvA specifically binds to HJ cruciform DNA, conferring on it an open structure. The RuvB hexamer acts as an ATP-dependent pump, pulling dsDNA into and through the RuvAB complex. HJ branch migration allows RuvC to scan DNA until it finds its consensus sequence, where it cleaves and resolves the cruciform DNA. In Erwinia tasmaniensis (strain DSM 17950 / CFBP 7177 / CIP 109463 / NCPPB 4357 / Et1/99), this protein is Holliday junction branch migration complex subunit RuvA.